The primary structure comprises 1091 residues: MEVSADPYEQKLYQMFRSCETQCGLLDEKSLLKLCSLLELRDQGSALIASLGGSHQLGVSFGQFKEALLNFLGSEFDGNTSSGFIERSLVITDEPLNNTYIESPPESSDREVSPKLVVGTKKYGRRSRPQQGIYELSVTDSDNTDEDQLQQQQNQRSLNGCDELGVQVQRSSSQSDLPGSRRLRSVHTSGSKLKRCASLPARRKMNSNTTGATTSPTAAAKLKQLSIQSQAQHSSSVESLDTVTPQQLETISVHSIMEAWELASIPNTRNLLHVLGFDEEEEVNLQQLTKALEEELRGIDGDHEQSNMLRALAALQATELGNYRLAYRQQHEENLKLRADNKAANQRVALLAVEVDERHASLEDNSKKQVQQLEQRHASMVREITLRMTNDRDHWTSMTGKLEAQLKSLEQEEIRLRTELELVRTENTELESEQQKAHIQITELLEQNIKLNQELAQTSSSIGGTPEHSPLRPRRHSEDKEEEMLQLMEKLAALQMENAQLRDKTDELTIEIESLNVELIRSKTKAKKQEKQEKQEDQESAATATKRRGDSPSKTHLTEESPRLGKQRKCTEGEQSDASNSGDWLALNSELQRSQSQDEELTSLRQRVAELEEELKAAKEGRSLTPESRSKELETSLEQMQRAYEDCEDYWQTKLSEERQLFEKERQIYEDEQHESDKKFTELMEKVREYEEQFSKDGRLSPIDERDMLEQQYSELEAEAAQLRSSSIQMLEEKAQEISSLQSEIEDLRQRLGESVEILTGACELTSESVAQLSAEAGKSPASSPISYLWLQSTIQEPAKSLADSKDEATASAIELLGGSPSHKTASRNNLTTSETSIFSTTPFESSQSGPSPTNSGNSNAYGANPGPAPISKPKRSQSPQQAAASEGEIADCETSSTASGKSFESNSKTSCLSHEKCSSPSALKEELKRLKFFELSLKEQIKDLSLQRDGLVMELQQLQEARPVLEKAYARTTHPTLQQRLNQLELRNRHLQNVIKQQQHYTESLMQQSWRQHQVELNDLHSRIETQGVLLADQTQRLQSADILVKDLYVENSHLTATVQRLEQQRARVNLIHQQQQQQRLVGGGLPGMP.

The tract at residues 1-361 (MEVSADPYEQ…AVEVDERHAS (361 aa)) is sufficient for binding to microtubules. 4 disordered regions span residues 100–216 (YIES…TTSP), 456–483 (AQTSSSIGGTPEHSPLRPRRHSEDKEEE), 525–602 (KAKK…EELT), and 616–639 (KAAKEGRSLTPESRSKELETSLEQ). S103, S107, S108, S113, and S141 each carry phosphoserine. T144 carries the phosphothreonine modification. Polar residues predominate over residues 168–177 (VQRSSSQSDL). Residues 487-526 (LMEKLAALQMENAQLRDKTDELTIEIESLNVELIRSKTKA) form a sufficient for interaction with ens region. Composition is skewed to basic and acidic residues over residues 527 to 537 (KKQEKQEKQED) and 547 to 563 (RRGDSPSKTHLTEESPR). S594 carries the post-translational modification Phosphoserine. Over residues 616-634 (KAAKEGRSLTPESRSKELE) the composition is skewed to basic and acidic residues. Residues S701 and S714 each carry the phosphoserine modification. The interval 799 to 919 (AKSLADSKDE…TSCLSHEKCS (121 aa)) is disordered. The segment covering 822 to 845 (SHKTASRNNLTTSETSIFSTTPFE) has biased composition (polar residues). A compositionally biased stretch (low complexity) spans 846-860 (SSQSGPSPTNSGNSN). Residues 894–913 (ETSSTASGKSFESNSKTSCL) are compositionally biased toward polar residues.

In terms of assembly, interacts with ens.

It localises to the cytoplasm. Its subcellular location is the cytoskeleton. The protein resides in the microtubule organizing center. The protein localises to the centrosome. It is found in the perinuclear region. Required for the positioning and anchorage of the microtubule minus-ends in various cells. In fat body cells, part of perinuclear non-centrosomal microtubule-organizing centers (ncMTOCs) which function to accommodate the organization of microtubule (MT) networks to control nuclear positioning and dynein motor-based retrograde endosomal trafficking. Within the ncMTOCs, Msp300 and shot anchors the ncMTOC at the nuclear surface and recruits the MT minus-end regulators Patronin and Nin for assembly, anchoring and/or stabilization of circumferential and radial MTs at the ncMTOC. This protein may also function with Patronin to recruit msps to the ncMTOC for the gamma-tubulin-independent elongation of radial MTs. In embryonic myotubes and larval myofibers, functions with ens to regulate myonuclear positioning and, as a consequence, is involved in muscle development. Likely functions by positively regulating ens. Essential for embryogenesis, likely by contributing to accurate chromosome segregation during early embryonic nuclear divisions. However, other reports found that it is not essential for embryogenesis or embryonic cellular divisions. The sequence is that of Ninein homolog from Drosophila melanogaster (Fruit fly).